The primary structure comprises 684 residues: Phenoloxidase 2 (684 aa).

The propeptide occupies M1–R50. The Cu cation site is built by H208, H212, and H238. Residue E350 is the Proton acceptor of the active site. Cu cation-binding residues include H365, H369, and H405. N448 and N492 each carry an N-linked (GlcNAc...) asparagine glycan. Cystine bridges form between C581–C623 and C583–C630. N-linked (GlcNAc...) asparagine glycosylation is found at N665 and N677.

Belongs to the tyrosinase family. Requires Cu(2+) as cofactor. In terms of processing, upon activation, a trypsin type protease cleaves prophenol oxidase to yield the active enzyme.

It localises to the secreted. It catalyses the reaction 2 L-dopa + O2 = 2 L-dopaquinone + 2 H2O. The enzyme catalyses L-tyrosine + O2 = L-dopaquinone + H2O. Its function is as follows. This is a copper-containing oxidase that functions in the formation of pigments such as melanins and other polyphenolic compounds. Catalyzes the rate-limiting conversions of tyrosine to DOPA, DOPA to DOPA-quinone and possibly 5,6 dihydroxyindole to indole-5'6 quinonee. The chain is Phenoloxidase 2 (PPO2) from Drosophila melanogaster (Fruit fly).